Here is a 283-residue protein sequence, read N- to C-terminus: Bifunctional protein FolD (283 aa).

NADP(+) is bound by residues 164-166 (GRS), Ser-189, and Thr-230.

It belongs to the tetrahydrofolate dehydrogenase/cyclohydrolase family. In terms of assembly, homodimer.

The enzyme catalyses (6R)-5,10-methylene-5,6,7,8-tetrahydrofolate + NADP(+) = (6R)-5,10-methenyltetrahydrofolate + NADPH. The catalysed reaction is (6R)-5,10-methenyltetrahydrofolate + H2O = (6R)-10-formyltetrahydrofolate + H(+). Its pathway is one-carbon metabolism; tetrahydrofolate interconversion. Functionally, catalyzes the oxidation of 5,10-methylenetetrahydrofolate to 5,10-methenyltetrahydrofolate and then the hydrolysis of 5,10-methenyltetrahydrofolate to 10-formyltetrahydrofolate. The chain is Bifunctional protein FolD from Dictyoglomus thermophilum (strain ATCC 35947 / DSM 3960 / H-6-12).